Here is a 236-residue protein sequence, read N- to C-terminus: Phosphoribosylaminoimidazole-succinocarboxamide synthase (236 aa).

Belongs to the SAICAR synthetase family.

The catalysed reaction is 5-amino-1-(5-phospho-D-ribosyl)imidazole-4-carboxylate + L-aspartate + ATP = (2S)-2-[5-amino-1-(5-phospho-beta-D-ribosyl)imidazole-4-carboxamido]succinate + ADP + phosphate + 2 H(+). It functions in the pathway purine metabolism; IMP biosynthesis via de novo pathway; 5-amino-1-(5-phospho-D-ribosyl)imidazole-4-carboxamide from 5-amino-1-(5-phospho-D-ribosyl)imidazole-4-carboxylate: step 1/2. The chain is Phosphoribosylaminoimidazole-succinocarboxamide synthase from Pelodictyon phaeoclathratiforme (strain DSM 5477 / BU-1).